Here is a 631-residue protein sequence, read N- to C-terminus: Phosphomethylpyrimidine synthase (631 aa).

Residues asparagine 239, methionine 268, tyrosine 297, histidine 333, 353-355 (SRG), 394-397 (DGLR), and glutamate 433 contribute to the substrate site. Histidine 437 provides a ligand contact to Zn(2+). Tyrosine 460 is a substrate binding site. Histidine 501 is a Zn(2+) binding site. Residues cysteine 581, cysteine 584, and cysteine 589 each coordinate [4Fe-4S] cluster.

This sequence belongs to the ThiC family. In terms of assembly, homodimer. [4Fe-4S] cluster serves as cofactor.

The catalysed reaction is 5-amino-1-(5-phospho-beta-D-ribosyl)imidazole + S-adenosyl-L-methionine = 4-amino-2-methyl-5-(phosphooxymethyl)pyrimidine + CO + 5'-deoxyadenosine + formate + L-methionine + 3 H(+). It functions in the pathway cofactor biosynthesis; thiamine diphosphate biosynthesis. Functionally, catalyzes the synthesis of the hydroxymethylpyrimidine phosphate (HMP-P) moiety of thiamine from aminoimidazole ribotide (AIR) in a radical S-adenosyl-L-methionine (SAM)-dependent reaction. The sequence is that of Phosphomethylpyrimidine synthase from Shigella dysenteriae serotype 1 (strain Sd197).